Consider the following 358-residue polypeptide: Arginine kinase (358 aa).

Residues 2–84 form the Phosphagen kinase N-terminal domain; it reads SDADLFSKLD…LDEVIKDYHK (83 aa). Residue 57-61 coordinates substrate; sequence GVGIY. The Phosphagen kinase C-terminal domain maps to 112–350; it reads FIVSTRVRVG…EEILKREKEL (239 aa). ATP is bound by residues 115–119 and histidine 178; that span reads STRVR. Glutamate 218 contributes to the substrate binding site. Arginine 222 contributes to the ATP binding site. Residue cysteine 265 coordinates substrate. ATP-binding positions include 274-278 and 303-308; these read RASVH and RGIHGE. Glutamate 308 contributes to the substrate binding site.

It belongs to the ATP:guanido phosphotransferase family.

It catalyses the reaction L-arginine + ATP = N(omega)-phospho-L-arginine + ADP + H(+). The chain is Arginine kinase from Turbo cornutus (Horned turban).